The sequence spans 60 residues: Metallothionein A (60 aa).

Residues methionine 1–cysteine 28 form a beta region. Residues cysteine 4, cysteine 6, cysteine 12, cysteine 14, cysteine 18, cysteine 20, cysteine 23, cysteine 25, cysteine 28, cysteine 32, cysteine 33, cysteine 35, cysteine 36, cysteine 40, cysteine 43, cysteine 47, cysteine 49, cysteine 54, cysteine 58, and cysteine 59 each contribute to the a divalent metal cation site. The tract at residues lysine 29–glutamine 60 is alpha.

It belongs to the metallothionein superfamily. Type 1 family.

In terms of biological role, metallothioneins have a high content of cysteine residues that bind various heavy metals. The chain is Metallothionein A (mta) from Parachaenichthys charcoti (Charcot's dragonfish).